We begin with the raw amino-acid sequence, 516 residues long: Bifunctional purine biosynthesis protein PurH (516 aa).

Residues 1–146 (MTRLALLSVS…KNYAHVTVLS (146 aa)) enclose the MGS-like domain.

Belongs to the PurH family.

It catalyses the reaction (6R)-10-formyltetrahydrofolate + 5-amino-1-(5-phospho-beta-D-ribosyl)imidazole-4-carboxamide = 5-formamido-1-(5-phospho-D-ribosyl)imidazole-4-carboxamide + (6S)-5,6,7,8-tetrahydrofolate. It carries out the reaction IMP + H2O = 5-formamido-1-(5-phospho-D-ribosyl)imidazole-4-carboxamide. The protein operates within purine metabolism; IMP biosynthesis via de novo pathway; 5-formamido-1-(5-phospho-D-ribosyl)imidazole-4-carboxamide from 5-amino-1-(5-phospho-D-ribosyl)imidazole-4-carboxamide (10-formyl THF route): step 1/1. It participates in purine metabolism; IMP biosynthesis via de novo pathway; IMP from 5-formamido-1-(5-phospho-D-ribosyl)imidazole-4-carboxamide: step 1/1. The chain is Bifunctional purine biosynthesis protein PurH from Rippkaea orientalis (strain PCC 8801 / RF-1) (Cyanothece sp. (strain PCC 8801)).